We begin with the raw amino-acid sequence, 339 residues long: Deoxyhypusine hydroxylase (339 aa).

2 HEAT-like PBS-type repeats span residues 71–97 (LKHE…VVKN) and 104–130 (CRHE…LRDD). The Fe cation site is built by H73, E74, H106, and E107. A disordered region spans residues 159–183 (EKLKPSDFTSIDPAPPLPMASSQPS). 3 HEAT-like PBS-type repeats span residues 200-233 (QRYR…GLKD), 238-264 (FRHE…TLSD), and 271-298 (VRHE…FLND). The Fe cation site is built by H240, E241, H273, and E274.

The protein belongs to the deoxyhypusine hydroxylase family. The cofactor is Fe(2+).

The protein resides in the cytoplasm. Its subcellular location is the nucleus. It catalyses the reaction [eIF5A protein]-deoxyhypusine + AH2 + O2 = [eIF5A protein]-hypusine + A + H2O. It participates in protein modification; eIF5A hypusination. Functionally, catalyzes the hydroxylation of the N(6)-(4-aminobutyl)-L-lysine intermediate to form hypusine, an essential post-translational modification only found in mature eIF-5A factor. The protein is Deoxyhypusine hydroxylase (lia1) of Aspergillus oryzae (strain ATCC 42149 / RIB 40) (Yellow koji mold).